Here is a 74-residue protein sequence, read N- to C-terminus: Sodium channel neurotoxin MeuNaTxalpha-11 (74 aa).

The first 7 residues, 1–7 (LMTGVES), serve as a signal peptide directing secretion. The LCN-type CS-alpha/beta domain occupies 9 to 73 (RDAYIAKPHN…VPIRIPGKCH (65 aa)). Disulfide bonds link C19–C72, C23–C45, C31–C55, and C35–C57. Position 74 (R74) is a propeptide, removed by a carboxypeptidase.

Belongs to the long (4 C-C) scorpion toxin superfamily. Sodium channel inhibitor family. Alpha subfamily. As to expression, expressed by the venom gland.

The protein localises to the secreted. Its function is as follows. Alpha toxins bind voltage-independently at site-3 of sodium channels (Nav) and inhibit the inactivation of the activated channels, thereby blocking neuronal transmission. The protein is Sodium channel neurotoxin MeuNaTxalpha-11 of Mesobuthus eupeus (Lesser Asian scorpion).